We begin with the raw amino-acid sequence, 119 residues long: NAD(P)H-quinone oxidoreductase subunit M (119 aa).

Belongs to the complex I NdhM subunit family. In terms of assembly, NDH-1 can be composed of about 15 different subunits; different subcomplexes with different compositions have been identified which probably have different functions.

It is found in the cell inner membrane. It carries out the reaction a plastoquinone + NADH + (n+1) H(+)(in) = a plastoquinol + NAD(+) + n H(+)(out). The enzyme catalyses a plastoquinone + NADPH + (n+1) H(+)(in) = a plastoquinol + NADP(+) + n H(+)(out). In terms of biological role, NDH-1 shuttles electrons from an unknown electron donor, via FMN and iron-sulfur (Fe-S) centers, to quinones in the respiratory and/or the photosynthetic chain. The immediate electron acceptor for the enzyme in this species is believed to be plastoquinone. Couples the redox reaction to proton translocation, and thus conserves the redox energy in a proton gradient. Cyanobacterial NDH-1 also plays a role in inorganic carbon-concentration. The sequence is that of NAD(P)H-quinone oxidoreductase subunit M from Gloeobacter violaceus (strain ATCC 29082 / PCC 7421).